The chain runs to 513 residues: ATP synthase subunit alpha (513 aa).

Residue 169 to 176 (GDRQTGKS) coordinates ATP.

Belongs to the ATPase alpha/beta chains family. F-type ATPases have 2 components, CF(1) - the catalytic core - and CF(0) - the membrane proton channel. CF(1) has five subunits: alpha(3), beta(3), gamma(1), delta(1), epsilon(1). CF(0) has three main subunits: a(1), b(2) and c(9-12). The alpha and beta chains form an alternating ring which encloses part of the gamma chain. CF(1) is attached to CF(0) by a central stalk formed by the gamma and epsilon chains, while a peripheral stalk is formed by the delta and b chains.

The protein resides in the cell inner membrane. The catalysed reaction is ATP + H2O + 4 H(+)(in) = ADP + phosphate + 5 H(+)(out). Produces ATP from ADP in the presence of a proton gradient across the membrane. The alpha chain is a regulatory subunit. In Blochmanniella floridana, this protein is ATP synthase subunit alpha.